The following is a 324-amino-acid chain: Glyoxylate/hydroxypyruvate reductase B (324 aa).

Residues arginine 237 and glutamate 266 contribute to the active site. The active-site Proton donor is histidine 285.

This sequence belongs to the D-isomer specific 2-hydroxyacid dehydrogenase family. GhrB subfamily. In terms of assembly, homodimer.

It localises to the cytoplasm. The catalysed reaction is glycolate + NADP(+) = glyoxylate + NADPH + H(+). The enzyme catalyses (R)-glycerate + NAD(+) = 3-hydroxypyruvate + NADH + H(+). It catalyses the reaction (R)-glycerate + NADP(+) = 3-hydroxypyruvate + NADPH + H(+). Catalyzes the NADPH-dependent reduction of glyoxylate and hydroxypyruvate into glycolate and glycerate, respectively. This Shigella flexneri serotype 5b (strain 8401) protein is Glyoxylate/hydroxypyruvate reductase B.